The chain runs to 258 residues: Nuclear egress protein 2 (258 aa).

Over 1–228 (MLKEKMYDEL…TVPIFARRNN (228 aa)) the chain is Perinuclear space. A helical membrane pass occupies residues 229-249 (ILCGFLVAALLIVCYVIFKEF). Residues 250-258 (ALSADFSAV) are Nuclear-facing.

Belongs to the herpesviridae NEC2 protein family. Forms a heterohexameric complex with NEC1. Phosphorylated.

It localises to the host nucleus inner membrane. Plays an essential role in virion nuclear egress, the first step of virion release from infected cell. Within the host nucleus, NEC1 interacts with the newly formed capsid through the vertexes and directs it to the inner nuclear membrane by associating with NEC2. Induces the budding of the capsid at the inner nuclear membrane as well as its envelopment into the perinuclear space. There, the NEC1/NEC2 complex promotes the fusion of the enveloped capsid with the outer nuclear membrane and the subsequent release of the viral capsid into the cytoplasm where it will reach the secondary budding sites in the host Golgi or trans-Golgi network. The polypeptide is Nuclear egress protein 2 (Homo sapiens (Human)).